Here is a 305-residue protein sequence, read N- to C-terminus: Methionyl-tRNA formyltransferase (305 aa).

110-113 (SLLP) provides a ligand contact to (6S)-5,6,7,8-tetrahydrofolate.

This sequence belongs to the Fmt family.

It carries out the reaction L-methionyl-tRNA(fMet) + (6R)-10-formyltetrahydrofolate = N-formyl-L-methionyl-tRNA(fMet) + (6S)-5,6,7,8-tetrahydrofolate + H(+). Functionally, attaches a formyl group to the free amino group of methionyl-tRNA(fMet). The formyl group appears to play a dual role in the initiator identity of N-formylmethionyl-tRNA by promoting its recognition by IF2 and preventing the misappropriation of this tRNA by the elongation apparatus. The protein is Methionyl-tRNA formyltransferase of Gluconacetobacter diazotrophicus (strain ATCC 49037 / DSM 5601 / CCUG 37298 / CIP 103539 / LMG 7603 / PAl5).